We begin with the raw amino-acid sequence, 107 residues long: Thioredoxin (107 aa).

Residues S2–S107 form the Thioredoxin domain. Catalysis depends on nucleophile residues C31 and C34. The cysteines at positions 31 and 34 are disulfide-linked.

It belongs to the thioredoxin family.

It is found in the plastid. Its subcellular location is the chloroplast. Functionally, participates in various redox reactions through the reversible oxidation of its active center dithiol to a disulfide and catalyzes dithiol-disulfide exchange reactions. The protein is Thioredoxin (trxA) of Pyropia yezoensis (Susabi-nori).